Consider the following 142-residue polypeptide: Potassium voltage-gated channel subfamily E regulatory beta subunit 5 (142 aa).

Residues asparagine 2 and asparagine 25 are each glycosylated (N-linked (GlcNAc...) asparagine). The helical transmembrane segment at 61 to 81 threads the bilayer; it reads LYILLIMIFYACLAGGLILAY. The Cytoplasmic portion of the chain corresponds to 82 to 142; it reads TRSRKLVEAK…PALAQGAERV (61 aa). The interval 119–142 is disordered; the sequence is SQAEGRRQLASEGLPALAQGAERV.

This sequence belongs to the potassium channel KCNE family. In terms of assembly, interacts with KCNQ1; impairs KCNQ1 localization in lipid rafts and only conducts current upon strong and continued depolarization. Highly expressed in heart, skeletal muscle, brain, spinal cord and placenta.

It localises to the membrane. Its function is as follows. Potassium channel ancillary subunit that is essential for generation of some native K(+) currents by virtue of formation of heteromeric ion channel complex with voltage-gated potassium (Kv) channel pore-forming alpha subunits. Functions as an inhibitory beta-subunit of the repolarizing cardiac potassium ion channel KCNQ1. This chain is Potassium voltage-gated channel subfamily E regulatory beta subunit 5 (KCNE5), found in Homo sapiens (Human).